The primary structure comprises 110 residues: Snake venom vascular endothelial growth factor toxin HF (110 aa).

Glutamine 1 is modified (pyrrolidone carboxylic acid). 3 cysteine pairs are disulfide-bonded: cysteine 14/cysteine 56, cysteine 45/cysteine 91, and cysteine 49/cysteine 93.

Belongs to the PDGF/VEGF growth factor family. Snake venom VEGF subfamily. In terms of assembly, homodimer; disulfide-linked. Interacts with VEGF receptor-2 (KDR) with high affinity. Expressed by the venom gland.

Its subcellular location is the secreted. Functionally, snake venom VEGFs that may contribute to venom dispersion and prey subjugation by inducing vascular permeability and hypotension. This protein induces an increase in capillary permeability after intradermal injection, as well as a drastic hypotensive effect after intravenous injection. The hypotension is mediated by nitric oxide (NO), which is produced by VEGF-activated endothelium NO synthase. Also induces angiogenesis in vitro, probably through VEGF receptor (KDR/VEGFR-2) signaling. This Vipera aspis aspis (Aspic viper) protein is Snake venom vascular endothelial growth factor toxin HF.